The primary structure comprises 192 residues: HTH-type transcriptional regulator Hpr (192 aa).

One can recognise an HTH marR-type domain in the interval 12-156; that stretch reads SIIFSHKFAQ…LLSIVRHVYG (145 aa). The segment at residues 62 to 85 is a DNA-binding region (H-T-H motif); that stretch reads ISDIAKFGVMHVSTAFNFSKKLEE.

As to quaternary structure, homodimer.

Its function is as follows. Negative regulator of protease production and sporulation. This is HTH-type transcriptional regulator Hpr from Halalkalibacterium halodurans (strain ATCC BAA-125 / DSM 18197 / FERM 7344 / JCM 9153 / C-125) (Bacillus halodurans).